Consider the following 1040-residue polypeptide: Multidrug resistance protein MdtB (1040 aa).

A run of 12 helical transmembrane segments spans residues 16-36 (FIMR…AGII), 347-367 (LMMA…NIPA), 369-389 (IIPG…MVFL), 396-416 (LTLM…IVVI), 440-460 (IGFT…PLLF), 472-492 (FAIT…TLTP), 537-557 (WLTL…WVFI), 863-883 (LGST…VLGI), 888-908 (FIHP…ALLA), 911-931 (IAGS…IGIV), 968-988 (ILMT…STGV), and 998-1018 (IGMV…TPVI).

Belongs to the resistance-nodulation-cell division (RND) (TC 2.A.6) family. MdtB subfamily. Part of a tripartite efflux system composed of MdtA, MdtB and MdtC. MdtB forms a heteromultimer with MdtC.

It localises to the cell inner membrane. In terms of biological role, the MdtABC tripartite complex confers resistance against novobiocin and deoxycholate. This is Multidrug resistance protein MdtB from Escherichia coli O45:K1 (strain S88 / ExPEC).